The following is a 332-amino-acid chain: L-lactate dehydrogenase C chain (332 aa).

Serine 2 bears the Blocked amino end (Ser) mark. NAD(+)-binding positions include 29 to 57 (GNVG…DENK) and arginine 99. Arginine 106, asparagine 138, and arginine 169 together coordinate substrate. Asparagine 138 serves as a coordination point for NAD(+). The Proton acceptor role is filled by histidine 193. Threonine 248 serves as a coordination point for substrate.

Belongs to the LDH/MDH superfamily. LDH family. In terms of assembly, homotetramer. Interacts with RABL2/RABL2A; binds preferentially to GTP-bound RABL2.

The protein resides in the cytoplasm. The enzyme catalyses (S)-lactate + NAD(+) = pyruvate + NADH + H(+). The protein operates within fermentation; pyruvate fermentation to lactate; (S)-lactate from pyruvate: step 1/1. Its function is as follows. Possible role in sperm motility. This Rattus norvegicus (Rat) protein is L-lactate dehydrogenase C chain (Ldhc).